Reading from the N-terminus, the 542-residue chain is MSSFSYEPYFSTSYKRRYVETPRVHISSVRSGYSTARSAYSSYSAPVSSSLSVRRSYSSSSGSLMPSLENLDLSQVAAISNDLKSIRTQEKAQLQDLNDRFASFIERVHELEQQNKVLEAELLVLRQKHSEPSRFRALYEQEIRDLRLAAEDATNEKQALQGEREGLEETLRNLQARYEEEVLSREDAEGRLMEARKGADEAALARAELEKRIDSLMDEIAFLKKVHEEEIAELQAQIQYAQISVEMDVSSKPDLSAALKDIRAQYEKLAAKNMQNAEEWFKSRFTVLTESAAKNTDAVRAAKDEVSESRRLLKAKTLEIEACRGMNEALEKQLQELEDKQNADISAMQDTINKLENELRSTKSEMARYLKEYQDLLNVKMALDIEIAAYRKLLEGEETRLSFTSVGSITSGYSQSSQVFGRSAYSGLQSSSYLMSARAFPAYYTSHVQEEQSEVEETIEATKAEEAKDEPPSEGEAEEEEKEKEEGEEEEGAEEEEAAKDESEDAKEEEGGEGEEEDTKESEEEEKKEESAGEEQAAKKKD.

Serine 2 carries the post-translational modification N-acetylserine. The interval 2-93 (SSFSYEPYFS…KSIRTQEKAQ (92 aa)) is head. O-linked (GlcNAc) threonine glycosylation occurs at threonine 21. At arginine 23 the chain carries Asymmetric dimethylarginine; alternate. Position 23 is an omega-N-methylarginine; alternate (arginine 23). O-linked (GlcNAc) serine glycosylation is present at serine 27. Position 30 is an omega-N-methylarginine (arginine 30). Tyrosine 43 carries the phosphotyrosine modification. A phosphoserine mark is found at serine 56, serine 67, and serine 103. The IF rod domain maps to 90 to 401 (EKAQLQDLND…KLLEGEETRL (312 aa)). Residues 94–125 (LQDLNDRFASFIERVHELEQQNKVLEAELLVL) form a coil 1A region. The segment at 126-138 (RQKHSEPSRFRAL) is linker 1. The interval 139-234 (YEQEIRDLRL…KVHEEEIAEL (96 aa)) is coil 1B. Residues 235–253 (QAQIQYAQISVEMDVSSKP) form a linker 12 region. Residues 254-272 (DLSAALKDIRAQYEKLAAK) form a coil 2A region. The segment at 273-281 (NMQNAEEWF) is linker 2. A coil 2B region spans residues 282–397 (KSRFTVLTES…AAYRKLLEGE (116 aa)). The epitope; recognized by IF-specific monoclonal antibody stretch occupies residues 382 to 392 (ALDIEIAAYRK). The tail, subdomain A stretch occupies residues 398-444 (ETRLSFTSVGSITSGYSQSSQVFGRSAYSGLQSSSYLMSARAFPAYY). The segment at 398–542 (ETRLSFTSVG…GEEQAAKKKD (145 aa)) is tail. The segment at 445 to 542 (TSHVQEEQSE…GEEQAAKKKD (98 aa)) is tail, subdomain B (acidic). A disordered region spans residues 451-542 (EQSEVEETIE…GEEQAAKKKD (92 aa)). The residue at position 453 (serine 453) is a Phosphoserine. Positions 460-471 (EATKAEEAKDEP) are enriched in basic and acidic residues. Positions 472–527 (PSEGEAEEEEKEKEEGEEEEGAEEEEAAKDESEDAKEEEGGEGEEEDTKESEEEEK) are enriched in acidic residues. Serine 473 and serine 503 each carry phosphoserine. At threonine 519 the chain carries Phosphothreonine. Phosphoserine is present on residues serine 522 and serine 531. The segment covering 528–542 (KEESAGEEQAAKKKD) has biased composition (basic and acidic residues).

Belongs to the intermediate filament family. As to quaternary structure, forms homodimers (in vitro). Forms heterodimers with NEFH or NEFM; which can further hetero-oligomerize (in vitro). Forms heterodimers with INA (in vitro). Interacts with ARHGEF28. Interacts with TRIM2. O-glycosylated; contains three N-acetylglucosamine side chains. In terms of processing, phosphorylated in the head and rod regions by the PKC kinase PKN1, leading to the inhibition of polymerization. Post-translationally, ubiquitinated in the presence of TRIM2 and UBE2D1. As to expression, expressed in the dorsal root ganglion neurons (at protein level).

Its subcellular location is the cell projection. The protein resides in the axon. It is found in the cytoplasm. It localises to the cytoskeleton. Neurofilaments usually contain three intermediate filament proteins: NEFL, NEFM, and NEFH which are involved in the maintenance of neuronal caliber. May additionally cooperate with the neuronal intermediate filament proteins PRPH and INA to form neuronal filamentous networks. In Rattus norvegicus (Rat), this protein is Neurofilament light polypeptide (Nefl).